We begin with the raw amino-acid sequence, 285 residues long: MLYLTKISNAGSEFTENEQKIADFLRARVSELKSVSSRQMAKQLGISQSSIVKFAQKLGAQGFTELRMALIGEYSASREKTNATALHLHSSITSDDSLEVIARKLNREKELALEQTCALFDYARLQKIIDVISKAQFIQITGLGGSALVGRDLSFKLMKIGYRVACEADTHVQATVSQALKKGDVQIAISYSGSKKEIVLCAEAARKQGATVIAITSLADSPLRRLAHFTLDTVSGETEWRSSSMSTRTAQNSVTDLLFVGLVQLNDVESLKMIQRSSELTQRLK.

Residues 1 to 77 (MLYLTKISNA…MALIGEYSAS (77 aa)) enclose the HTH rpiR-type domain. Positions 37 to 56 (SRQMAKQLGISQSSIVKFAQ) form a DNA-binding region, H-T-H motif. The SIS domain maps to 128–268 (IIDVISKAQF…FVGLVQLNDV (141 aa)).

As to quaternary structure, homotetramer.

Its pathway is amino-sugar metabolism; N-acetylmuramate degradation [regulation]. Its function is as follows. Represses the expression of the murPQ operon involved in the uptake and degradation of N-acetylmuramic acid (MurNAc). Binds to two adjacent inverted repeats within the operator region. MurNAc 6-phosphate, the substrate of MurQ, is the specific inducer that weakens binding of MurR to the operator. The chain is HTH-type transcriptional regulator MurR from Escherichia coli (strain B / BL21-DE3).